The sequence spans 89 residues: MSLDKGTKEEITKKFQLHEKDTGSADVQIAILTEHITELKEHLKRSPKDQNSRLALLKLVGQRRKLLEYLNSTDTERYKNLISRLNLRK.

Belongs to the universal ribosomal protein uS15 family. Part of the 30S ribosomal subunit. Forms a bridge to the 50S subunit in the 70S ribosome, contacting the 23S rRNA.

Its function is as follows. One of the primary rRNA binding proteins, it binds directly to 16S rRNA where it helps nucleate assembly of the platform of the 30S subunit by binding and bridging several RNA helices of the 16S rRNA. In terms of biological role, forms an intersubunit bridge (bridge B4) with the 23S rRNA of the 50S subunit in the ribosome. The protein is Small ribosomal subunit protein uS15 of Chlamydia abortus (strain DSM 27085 / S26/3) (Chlamydophila abortus).